The sequence spans 303 residues: Heme A synthase (303 aa).

Residues 1-8 lie on the Cytoplasmic side of the membrane; it reads MFGKKNLK. The chain crosses the membrane as a helical span at residues 9 to 29; the sequence is WLGVVATLMMTFVQLGGALVT. The Extracellular segment spans residues 30–67; the sequence is KTGSADGCGSSWPLCHGALIPEFFPIDTIIELSHRAVS. The cysteines at positions 37 and 44 are disulfide-linked. Residue E60 is part of the active site. Position 63 (H63) interacts with heme o. Residues 68–88 form a helical membrane-spanning segment; that stretch reads ALSLLMVLWLVITAWKHIGYI. At 89–93 the chain is on the cytoplasmic side; that stretch reads KEIKP. A helical membrane pass occupies residues 94-114; that stretch reads LSIISVGFLLLQALIGAAAVI. At 115–125 the chain is on the extracellular side; sequence WQQNDYVLALH. A heme o-binding site is contributed by H125. A helical membrane pass occupies residues 126–146; the sequence is FGISLISFSSVFLITLIIFSI. The Cytoplasmic portion of the chain corresponds to 147–163; it reads DQKYEAAELYIKKPLRR. The helical transmembrane segment at 164-184 threads the bilayer; sequence LTWLMAIIIYCGVYTGALVRH. The Extracellular segment spans residues 185–215; sequence ADASLAYGGWPLPFHDLVPHSEQDWVQLTHR. H214 contacts heme b. A helical transmembrane segment spans residues 216-236; that stretch reads IMAFIVFTIIMITYIHAVKNY. Topologically, residues 237 to 244 are cytoplasmic; that stretch reads PNNRTVHY. Residues 245 to 265 form a helical membrane-spanning segment; that stretch reads GYTAAFILVILQVITGALSIM. At 266 to 270 the chain is on the extracellular side; sequence TNVNL. A helical membrane pass occupies residues 271 to 291; the sequence is IIALFHALFITYLFGMTTYFI. H276 serves as a coordination point for heme b. At 292 to 303 the chain is on the cytoplasmic side; the sequence is MLMLRSVRSDKQ.

This sequence belongs to the COX15/CtaA family. Type 1 subfamily. As to quaternary structure, interacts with CtaB. Requires heme b as cofactor.

It localises to the cell membrane. It carries out the reaction Fe(II)-heme o + 2 A + H2O = Fe(II)-heme a + 2 AH2. It participates in porphyrin-containing compound metabolism; heme A biosynthesis; heme A from heme O: step 1/1. In terms of biological role, catalyzes the conversion of heme O to heme A by two successive hydroxylations of the methyl group at C8. The first hydroxylation forms heme I, the second hydroxylation results in an unstable dihydroxymethyl group, which spontaneously dehydrates, resulting in the formyl group of heme A. This chain is Heme A synthase, found in Staphylococcus aureus (strain bovine RF122 / ET3-1).